A 192-amino-acid chain; its full sequence is Imidazoleglycerol-phosphate dehydratase (192 aa).

The protein belongs to the imidazoleglycerol-phosphate dehydratase family.

The protein resides in the cytoplasm. The enzyme catalyses D-erythro-1-(imidazol-4-yl)glycerol 3-phosphate = 3-(imidazol-4-yl)-2-oxopropyl phosphate + H2O. The protein operates within amino-acid biosynthesis; L-histidine biosynthesis; L-histidine from 5-phospho-alpha-D-ribose 1-diphosphate: step 6/9. This Clostridioides difficile (strain 630) (Peptoclostridium difficile) protein is Imidazoleglycerol-phosphate dehydratase.